A 393-amino-acid chain; its full sequence is Sugar efflux transporter B (393 aa).

A run of 12 helical transmembrane segments spans residues 13-33 (FDLT…AGAL), 51-71 (AMVG…SQFL), 82-102 (KSLI…FAWN), 106-126 (FVLL…NPQM), 152-172 (VSLA…GFSF), 174-194 (VMYL…WLFL), 219-239 (LLLF…IINM), 253-273 (LAGV…LIAG), 283-303 (FLMR…LMAH), 306-326 (VILL…GGIG), 344-364 (LYTN…GIVA), and 366-386 (IWNY…TLFC).

It belongs to the major facilitator superfamily. Set transporter family.

The protein localises to the cell inner membrane. In terms of biological role, involved in the efflux of sugars. The physiological role may be the detoxification of non-metabolizable sugar analogs. Can transport lactose and glucose. In Escherichia coli (strain K12), this protein is Sugar efflux transporter B (setB).